A 93-amino-acid polypeptide reads, in one-letter code: Putative defensin-like protein 282 (93 aa).

An N-terminal signal peptide occupies residues Met1–Gly25. 3 disulfide bridges follow: Cys51–Cys83, Cys66–Cys90, and Cys72–Cys92.

It belongs to the DEFL family.

Its subcellular location is the secreted. This chain is Putative defensin-like protein 282, found in Arabidopsis thaliana (Mouse-ear cress).